The chain runs to 226 residues: Imidazoleglycerol-phosphate dehydratase (226 aa).

The disordered stretch occupies residues 23 to 55 (LTGGPIERPQPSLFASEKGANTAGPDDASQTTA).

Belongs to the imidazoleglycerol-phosphate dehydratase family.

It carries out the reaction D-erythro-1-(imidazol-4-yl)glycerol 3-phosphate = 3-(imidazol-4-yl)-2-oxopropyl phosphate + H2O. Its pathway is amino-acid biosynthesis; L-histidine biosynthesis; L-histidine from 5-phospho-alpha-D-ribose 1-diphosphate: step 6/9. In Maudiozyma humilis (Sour dough yeast), this protein is Imidazoleglycerol-phosphate dehydratase (HIS3).